We begin with the raw amino-acid sequence, 572 residues long: Isocitrate dehydrogenase kinase/phosphatase (572 aa).

Residues 317–323 (APGVRGM) and Lys338 contribute to the ATP site. Asp373 is an active-site residue.

It belongs to the AceK family.

It is found in the cytoplasm. The catalysed reaction is L-seryl-[isocitrate dehydrogenase] + ATP = O-phospho-L-seryl-[isocitrate dehydrogenase] + ADP + H(+). Functionally, bifunctional enzyme which can phosphorylate or dephosphorylate isocitrate dehydrogenase (IDH) on a specific serine residue. This is a regulatory mechanism which enables bacteria to bypass the Krebs cycle via the glyoxylate shunt in response to the source of carbon. When bacteria are grown on glucose, IDH is fully active and unphosphorylated, but when grown on acetate or ethanol, the activity of IDH declines drastically concomitant with its phosphorylation. The sequence is that of Isocitrate dehydrogenase kinase/phosphatase from Ectopseudomonas mendocina (strain ymp) (Pseudomonas mendocina).